The chain runs to 92 residues: Small ribosomal subunit protein uS19 (92 aa).

Belongs to the universal ribosomal protein uS19 family.

Protein S19 forms a complex with S13 that binds strongly to the 16S ribosomal RNA. The chain is Small ribosomal subunit protein uS19 from Vibrio vulnificus (strain CMCP6).